Reading from the N-terminus, the 415-residue chain is tRNA (cytosine(38)-C(5))-methyltransferase (415 aa).

An SAM-dependent MTase C5-type domain is found at 4–396 (LRVLELYSGI…TVLCEGFGNA (393 aa)). Residues 13–15 (IGG), Asp-34, 57–58 (IE), and Ser-76 each bind S-adenosyl-L-methionine. Cys-79 is an active-site residue. Ser-376 lines the S-adenosyl-L-methionine pocket.

This sequence belongs to the class I-like SAM-binding methyltransferase superfamily. C5-methyltransferase family. In terms of tissue distribution, highly expressed in thymus, testis, and at much lower levels in spleen, lung, brain, heart, kidney, liver, skeletal muscle and embryonic stem cells.

The protein resides in the cytoplasm. The enzyme catalyses cytidine(38) in tRNA + S-adenosyl-L-methionine = 5-methylcytidine(38) in tRNA + S-adenosyl-L-homocysteine + H(+). Functionally, specifically methylates cytosine 38 in the anticodon loop of tRNA(Asp). Has higher activity on tRNA(Asp) modified with queuosine at position 34. This Mus musculus (Mouse) protein is tRNA (cytosine(38)-C(5))-methyltransferase (Trdmt1).